A 513-amino-acid polypeptide reads, in one-letter code: ATP synthase subunit alpha (513 aa).

169-176 (GDRQTGKT) contributes to the ATP binding site.

It belongs to the ATPase alpha/beta chains family. As to quaternary structure, F-type ATPases have 2 components, CF(1) - the catalytic core - and CF(0) - the membrane proton channel. CF(1) has five subunits: alpha(3), beta(3), gamma(1), delta(1), epsilon(1). CF(0) has three main subunits: a(1), b(2) and c(9-12). The alpha and beta chains form an alternating ring which encloses part of the gamma chain. CF(1) is attached to CF(0) by a central stalk formed by the gamma and epsilon chains, while a peripheral stalk is formed by the delta and b chains.

The protein resides in the cell inner membrane. The catalysed reaction is ATP + H2O + 4 H(+)(in) = ADP + phosphate + 5 H(+)(out). Functionally, produces ATP from ADP in the presence of a proton gradient across the membrane. The alpha chain is a regulatory subunit. This Vesicomyosocius okutanii subsp. Calyptogena okutanii (strain HA) protein is ATP synthase subunit alpha.